The following is an 880-amino-acid chain: MSGSKPDILWAPHHVDRFVVCDSELSLYHIESAASPSSELKAGSLRLSEETTATLLAINSDTPYMKCVAWYPKYDPECLLAVGQANGRVVLTSLGQDHNSKCKDLIGKEFVPKHARQCNTLAWNPQDSNWLAAGLDKHRADFSVLIWDISSKYTPEVAVPAEKVRLAPGDSETCSVVTKPLYELGQNDACLSLCWLPRDQKLLLAGMHRNLAIFDLRNTNQKMFVNTKAVQGVTVDPHFHDRVASFFEGQVAIWDLRKFEKPVLTLTEQPKPLTKVAWCPTRTGLLATLTRDSNIIRLYDMQHTPTPIGDETEPTIIERSVQPCDNYIASFAWHPTSQNRMVVVTPNRSMSDFTVFERISLAWSPTTSLMWACSRQLYECTEEGKGSSSLDRDIATKMRLRALSRYGLDTEQVWRNHLLAGNDDPQLKSLWYTLHFMKQYAEDIDQKSSGNKGLLVYAGIKAITKSSMGTTESFRHSWTGSDRQADIVHYSSEERCLALQLCGWRTKGADSDMGPFLNSLEQEGEWERAAAIALFNRDIRRAIQILNKGASTGKGNLNLNVVAMALSGYTDEKKSLWREMCSTLRLQLNNPYLCVMFAFLTSEPGVYDGVLYENSMAVRDRVAFSCLFLNDAQLSRYFDKLTNEMKEAGNLEGILLTGLTKDGVDLIESYVDRTGDVQTASYCMLQGSPSDVLKDERVQYWIESYRNLLDAWRFWHKRAEFDIHRSKLDPSSKPLAQVFVSCNFCGKSISYSCSSVPHQGRGFSQYGVSGSPTKSKFTSCPGCRKPLPRCALCLINMGNPVSSSPGASKSDEKVDLSKEKKVAKFNNWFTWCHNCRHGGHAGHMLSWFKDHSECPVSACSCKCMQLDTTGNLVPAENVQP.

WD repeat units follow at residues 60-102 (SDTP…NSKC), 113-157 (KHAR…TPEV), 185-224 (GQNDACLSLCWLPRDQKLLLAGMHRNLAIFDLRNTNQKMF), 226-264 (NTKAVQGVTVDPHFHDRVASFFEGQVAIWDLRKFEKPVL), 268-309 (EQPK…TPIG), and 399-441 (RLRA…KQYA). The segment at 740–786 (VSCNFCGKSISYSCSSVPHQGRGFSQYGVSGSPTKSKFTSCPGCRKP) adopts a C4-type zinc-finger fold. 13 residues coordinate Zn(2+): cysteine 742, cysteine 745, cysteine 780, cysteine 783, cysteine 793, cysteine 832, cysteine 835, histidine 837, histidine 840, histidine 843, cysteine 854, cysteine 859, and cysteine 863. Residues 787-868 (LPRCALCLIN…CSCKCMQLDT (82 aa)) form an RING-type; atypical zinc finger.

It belongs to the WD repeat mio family. In terms of assembly, component of the GATOR2 subcomplex, composed of MIOS, SEC13, SEH1L, WDR24 and WDR59. The GATOR2 complex interacts with CASTOR1 and CASTOR2; the interaction is negatively regulated by arginine. The GATOR2 complex interacts with SESN1, SESN2 and SESN3; the interaction is negatively regulated by amino acids. Interacts with SAR1; the interaction is direct, disrupted by leucine and mediates the interaction of SAR1 with the GATOR2 complex to negatively regulate the TORC1 signaling upon leucine deprivation.

The protein localises to the lysosome membrane. The GATOR2 complex is negatively regulated by the upstream amino acid sensors CASTOR1 and SESN2, which sequester the GATOR2 complex in absence of amino acids. In the presence of abundant amino acids, GATOR2 is released from CASTOR1 and SESN2 and activated. As a component of the GATOR2 complex, functions as an activator of the amino acid-sensing branch of the mTORC1 signaling pathway. The GATOR2 complex indirectly activates mTORC1 through the inhibition of the GATOR1 subcomplex. GATOR2 probably acts as an E3 ubiquitin-protein ligase toward GATOR1. In the presence of abundant amino acids, the GATOR2 complex mediates ubiquitination of the NPRL2 core component of the GATOR1 complex, leading to GATOR1 inactivation. In the absence of amino acids, GATOR2 is inhibited, activating the GATOR1 complex. Within the GATOR2 complex, MIOS is required to prevent autoubiquitination of WDR24, the catalytic subunit of the complex. This chain is GATOR2 complex protein MIOS-A, found in Xenopus laevis (African clawed frog).